Here is a 175-residue protein sequence, read N- to C-terminus: Interferon gamma (175 aa).

Positions 1–23 (MNATCCILALLLCLTQAISGCYC) are cleaved as a signal peptide. Gln24 is subject to Pyrrolidone carboxylic acid. Residues Asn39 and Asn106 are each glycosylated (N-linked (GlcNAc...) asparagine).

This sequence belongs to the type II (or gamma) interferon family. In terms of assembly, homodimer. Interacts with IFNGR1 (via extracellular domain); this interaction promotes IFNGR1 dimerization. As to expression, released primarily from activated T lymphocytes.

It localises to the secreted. Functionally, type II interferon produced by immune cells such as T-cells and NK cells that plays crucial roles in antimicrobial, antiviral, and antitumor responses by activating effector immune cells and enhancing antigen presentation. Primarily signals through the JAK-STAT pathway after interaction with its receptor IFNGR1 to affect gene regulation. Upon IFNG binding, IFNGR1 intracellular domain opens out to allow association of downstream signaling components JAK2, JAK1 and STAT1, leading to STAT1 activation, nuclear translocation and transcription of IFNG-regulated genes. Many of the induced genes are transcription factors such as IRF1 that are able to further drive regulation of a next wave of transcription. Plays a role in class I antigen presentation pathway by inducing a replacement of catalytic proteasome subunits with immunoproteasome subunits. In turn, increases the quantity, quality, and repertoire of peptides for class I MHC loading. Increases the efficiency of peptide generation also by inducing the expression of activator PA28 that associates with the proteasome and alters its proteolytic cleavage preference. Up-regulates as well MHC II complexes on the cell surface by promoting expression of several key molecules such as cathepsins B/CTSB, H/CTSH, and L/CTSL. Participates in the regulation of hematopoietic stem cells during development and under homeostatic conditions by affecting their development, quiescence, and differentiation. The protein is Interferon gamma (IFNG) of Peromyscus maniculatus (North American deer mouse).